A 1227-amino-acid polypeptide reads, in one-letter code: DNA-directed RNA polymerase subunit beta (1227 aa).

Belongs to the RNA polymerase beta chain family. As to quaternary structure, the RNAP catalytic core consists of 2 alpha, 1 beta, 1 beta' and 1 omega subunit. When a sigma factor is associated with the core the holoenzyme is formed, which can initiate transcription.

The enzyme catalyses RNA(n) + a ribonucleoside 5'-triphosphate = RNA(n+1) + diphosphate. Functionally, DNA-dependent RNA polymerase catalyzes the transcription of DNA into RNA using the four ribonucleoside triphosphates as substrates. This chain is DNA-directed RNA polymerase subunit beta, found in Chloroflexus aurantiacus (strain ATCC 29366 / DSM 635 / J-10-fl).